A 417-amino-acid polypeptide reads, in one-letter code: Serine--tRNA ligase (417 aa).

226–228 lines the L-serine pocket; that stretch reads TSE. Residues 257-259 and V273 contribute to the ATP site; that span reads RRE. E280 contacts L-serine. 344 to 347 contacts ATP; sequence ELTS. T379 is a binding site for L-serine.

It belongs to the class-II aminoacyl-tRNA synthetase family. Type-1 seryl-tRNA synthetase subfamily. In terms of assembly, homodimer. The tRNA molecule binds across the dimer.

It is found in the cytoplasm. It carries out the reaction tRNA(Ser) + L-serine + ATP = L-seryl-tRNA(Ser) + AMP + diphosphate + H(+). The enzyme catalyses tRNA(Sec) + L-serine + ATP = L-seryl-tRNA(Sec) + AMP + diphosphate + H(+). It functions in the pathway aminoacyl-tRNA biosynthesis; selenocysteinyl-tRNA(Sec) biosynthesis; L-seryl-tRNA(Sec) from L-serine and tRNA(Sec): step 1/1. Functionally, catalyzes the attachment of serine to tRNA(Ser). Is also able to aminoacylate tRNA(Sec) with serine, to form the misacylated tRNA L-seryl-tRNA(Sec), which will be further converted into selenocysteinyl-tRNA(Sec). The polypeptide is Serine--tRNA ligase (Mycobacterium sp. (strain JLS)).